We begin with the raw amino-acid sequence, 81 residues long: MNPIISAASVIAAGLAVGLASIGPGVGQGTAAGQAVEGIARQPEAEGKIRGTLLLSLAFMEALTIYGLVVALALLFANPFV.

Helical transmembrane passes span 3-23 and 57-77; these read PIIS…ASIG and LAFM…LLFA.

Belongs to the ATPase C chain family. In terms of assembly, F-type ATPases have 2 components, F(1) - the catalytic core - and F(0) - the membrane proton channel. F(1) has five subunits: alpha(3), beta(3), gamma(1), delta(1), epsilon(1). F(0) has four main subunits: a(1), b(1), b'(1) and c(10-14). The alpha and beta chains form an alternating ring which encloses part of the gamma chain. F(1) is attached to F(0) by a central stalk formed by the gamma and epsilon chains, while a peripheral stalk is formed by the delta, b and b' chains.

Its subcellular location is the plastid. The protein resides in the chloroplast thylakoid membrane. In terms of biological role, f(1)F(0) ATP synthase produces ATP from ADP in the presence of a proton or sodium gradient. F-type ATPases consist of two structural domains, F(1) containing the extramembraneous catalytic core and F(0) containing the membrane proton channel, linked together by a central stalk and a peripheral stalk. During catalysis, ATP synthesis in the catalytic domain of F(1) is coupled via a rotary mechanism of the central stalk subunits to proton translocation. Its function is as follows. Key component of the F(0) channel; it plays a direct role in translocation across the membrane. A homomeric c-ring of between 10-14 subunits forms the central stalk rotor element with the F(1) delta and epsilon subunits. The protein is ATP synthase subunit c, chloroplastic of Phaseolus vulgaris (Kidney bean).